Reading from the N-terminus, the 199-residue chain is Recombination protein RecR (199 aa).

Residues 57–72 (CPICGNITEKEVCDIC) form a C4-type zinc finger. In terms of domain architecture, Toprim spans 80-176 (TTIMVVEQPK…KVTRLAAGLS (97 aa)).

Belongs to the RecR family.

Its function is as follows. May play a role in DNA repair. It seems to be involved in an RecBC-independent recombinational process of DNA repair. It may act with RecF and RecO. The sequence is that of Recombination protein RecR from Lactobacillus helveticus (strain DPC 4571).